The primary structure comprises 266 residues: Probable catechol O-methyltransferase 1 (266 aa).

Residues I56, E78, S86, E106, V107, A135, and D162 each contribute to the S-adenosyl-L-methionine site. D162 contacts Mg(2+). K165 is a binding site for substrate. 2 residues coordinate Mg(2+): D190 and N191. Residue N191 participates in substrate binding.

This sequence belongs to the class I-like SAM-binding methyltransferase superfamily. Cation-dependent O-methyltransferase family. Mg(2+) serves as cofactor.

It localises to the cytoplasm. Its subcellular location is the nucleus. The enzyme catalyses a catechol + S-adenosyl-L-methionine = a guaiacol + S-adenosyl-L-homocysteine + H(+). This is Probable catechol O-methyltransferase 1 from Schizosaccharomyces pombe (strain 972 / ATCC 24843) (Fission yeast).